The chain runs to 92 residues: NELL2-interacting cell ontogeny regulator 1 (92 aa).

The N-terminal stretch at 1 to 30 (MALPSAWSVMRVVIPFISVLGLLGVRLVGA) is a signal peptide.

It belongs to the NICOL family.

It localises to the secreted. Its subcellular location is the cytoplasm. It is found in the perinuclear region. MRNA-binding protein which interacts with a range of target mRNAs and may promote extracellular matrix production. May function as a component of lumicrine signaling and may play a crucial role in epididymal-mediated sperm maturation and male fertility. This chain is NELL2-interacting cell ontogeny regulator 1, found in Gallus gallus (Chicken).